The sequence spans 118 residues: uncharacterized protein (118 aa).

To M.jannaschii MJ0310 and MJ1340.

This is an uncharacterized protein from Methanocaldococcus jannaschii (strain ATCC 43067 / DSM 2661 / JAL-1 / JCM 10045 / NBRC 100440) (Methanococcus jannaschii).